Consider the following 517-residue polypeptide: Recombining binding protein suppressor of hairless-like protein (517 aa).

Residues 26–37 are compositionally biased toward basic and acidic residues; that stretch reads EMQLQSEADRRS. The segment at 26 to 48 is disordered; the sequence is EMQLQSEADRRSLPGTWTRSSPE. DNA-binding regions lie at residues 78 to 88, 193 to 198, and 220 to 225; these read QKSYGNEKRFF, SKPSQK, and RLRSQT. The 126-residue stretch at 387-512 folds into the IPT/TIG domain; that stretch reads LISTLELSGG…HQEFTRTNFH (126 aa).

Belongs to the Su(H) family. Interacts weakly with EBNA2. Does not interact with any Notch proteins.

Its subcellular location is the nucleus. Putative transcription factor, which cooperates with EBNA2 to activate transcription. The protein is Recombining binding protein suppressor of hairless-like protein (RBPJL) of Homo sapiens (Human).